We begin with the raw amino-acid sequence, 217 residues long: Octanoyltransferase (217 aa).

Residues 31–206 (KSVMDEAWLL…ELVSRLGYAE (176 aa)) form the BPL/LPL catalytic domain. Substrate is bound by residues 70–77 (RGGQVTYH), 137–139 (SLG), and 150–152 (GLA). Cys-168 (acyl-thioester intermediate) is an active-site residue.

This sequence belongs to the LipB family.

Its subcellular location is the cytoplasm. The catalysed reaction is octanoyl-[ACP] + L-lysyl-[protein] = N(6)-octanoyl-L-lysyl-[protein] + holo-[ACP] + H(+). Its pathway is protein modification; protein lipoylation via endogenous pathway; protein N(6)-(lipoyl)lysine from octanoyl-[acyl-carrier-protein]: step 1/2. Its function is as follows. Catalyzes the transfer of endogenously produced octanoic acid from octanoyl-acyl-carrier-protein onto the lipoyl domains of lipoate-dependent enzymes. Lipoyl-ACP can also act as a substrate although octanoyl-ACP is likely to be the physiological substrate. The chain is Octanoyltransferase from Pseudomonas aeruginosa (strain UCBPP-PA14).